Reading from the N-terminus, the 314-residue chain is DNA-directed RNA polymerase subunit alpha (314 aa).

The segment at 1 to 228 is alpha N-terminal domain (alpha-NTD); that stretch reads MIEIEKPKIE…EHLNIFVGLT (228 aa). The alpha C-terminal domain (alpha-CTD) stretch occupies residues 245 to 314; sequence KEKVLEMTIE…ELGLGLRKDD (70 aa).

It belongs to the RNA polymerase alpha chain family. Homodimer. The RNAP catalytic core consists of 2 alpha, 1 beta, 1 beta' and 1 omega subunit. When a sigma factor is associated with the core the holoenzyme is formed, which can initiate transcription.

The enzyme catalyses RNA(n) + a ribonucleoside 5'-triphosphate = RNA(n+1) + diphosphate. Its function is as follows. DNA-dependent RNA polymerase catalyzes the transcription of DNA into RNA using the four ribonucleoside triphosphates as substrates. This Bacillus licheniformis (strain ATCC 14580 / DSM 13 / JCM 2505 / CCUG 7422 / NBRC 12200 / NCIMB 9375 / NCTC 10341 / NRRL NRS-1264 / Gibson 46) protein is DNA-directed RNA polymerase subunit alpha.